A 274-amino-acid polypeptide reads, in one-letter code: Large ribosomal subunit protein uL2 (274 aa).

The segment at 221–274 (RGTAMNPVDHPHGGGEGRNFGKHPVTPWGVQTKGKKTRSNKRTDKFIVRRRSKK) is disordered.

Belongs to the universal ribosomal protein uL2 family. Part of the 50S ribosomal subunit. Forms a bridge to the 30S subunit in the 70S ribosome.

Functionally, one of the primary rRNA binding proteins. Required for association of the 30S and 50S subunits to form the 70S ribosome, for tRNA binding and peptide bond formation. It has been suggested to have peptidyltransferase activity; this is somewhat controversial. Makes several contacts with the 16S rRNA in the 70S ribosome. The polypeptide is Large ribosomal subunit protein uL2 (Yersinia pseudotuberculosis serotype O:1b (strain IP 31758)).